The following is a 21-amino-acid chain: Putative NADH dehydrogenase subunit PS9 (21 aa).

This chain is Putative NADH dehydrogenase subunit PS9, found in Pinus strobus (Eastern white pine).